The sequence spans 488 residues: MKKLTALFNLPELKNDIELHNMVLDSRKVKAGDLFVAIKGHQVDGNQFIDSALHSGASAVVSETELSSEHLTVAFIGNVPVVKYHQLARHLSSLADVFYDSPSKNLTLVGVTGTNGKTTISQLLAQWAELLGLRAAVMGTIGNGLFGQIVEAKNTTGSAVEIQSSLSTFKHAGADFTSIEVSSHGLAQHRVEALHFKAAIFTNLTRDHLDYHQSMENYAAAKKRLFTELDTQIKVINADDEIGYQWLTKLPDAIAVSMNADFKVGSHQWMKAINIHYHFKGADITFESSWGNGVLHSPLIGAFNVSNLLLVMTTLLSFGYPLENLLATAKSLKGVCGRMEMIQYPNKPTVIVDYAHTPDALEKALIAAREHCQGELWCIFGCGGDRDRGKRPLMAQVAEQFAEKIIVTKDNPRTEPQSQIEADIVAGFKNMEKVGIIPDRAQAIQFAIESAVENDVILIAGKGHEHYQIIGSEVVHFSDQEIALDFLK.

UDP-N-acetyl-alpha-D-muramoyl-L-alanyl-D-glutamate contacts are provided by residues Leu-24, Ser-26, and 41-43 (HQV). Residue 113 to 119 (GTNGKTT) coordinates ATP. Residues Asn-154, 155–156 (TT), Ser-182, Gln-188, and Arg-190 contribute to the UDP-N-acetyl-alpha-D-muramoyl-L-alanyl-D-glutamate site. Residue Lys-222 is modified to N6-carboxylysine. Meso-2,6-diaminopimelate-binding positions include Arg-386, 410-413 (DNPR), Gly-461, and Glu-465. Residues 410–413 (DNPR) carry the Meso-diaminopimelate recognition motif motif.

The protein belongs to the MurCDEF family. MurE subfamily. The cofactor is Mg(2+). Carboxylation is probably crucial for Mg(2+) binding and, consequently, for the gamma-phosphate positioning of ATP.

The protein localises to the cytoplasm. The catalysed reaction is UDP-N-acetyl-alpha-D-muramoyl-L-alanyl-D-glutamate + meso-2,6-diaminopimelate + ATP = UDP-N-acetyl-alpha-D-muramoyl-L-alanyl-gamma-D-glutamyl-meso-2,6-diaminopimelate + ADP + phosphate + H(+). It participates in cell wall biogenesis; peptidoglycan biosynthesis. In terms of biological role, catalyzes the addition of meso-diaminopimelic acid to the nucleotide precursor UDP-N-acetylmuramoyl-L-alanyl-D-glutamate (UMAG) in the biosynthesis of bacterial cell-wall peptidoglycan. In Haemophilus influenzae (strain PittEE), this protein is UDP-N-acetylmuramoyl-L-alanyl-D-glutamate--2,6-diaminopimelate ligase.